A 58-amino-acid polypeptide reads, in one-letter code: Large ribosomal subunit protein uL30 (58 aa).

It belongs to the universal ribosomal protein uL30 family. In terms of assembly, part of the 50S ribosomal subunit.

The sequence is that of Large ribosomal subunit protein uL30 from Novosphingobium aromaticivorans (strain ATCC 700278 / DSM 12444 / CCUG 56034 / CIP 105152 / NBRC 16084 / F199).